An 893-amino-acid chain; its full sequence is MAELPQSRINERNITSEMRESFLDYAMSVIVSRALPDVRDGLKPVHRRILYGLNEQGMTPDKPYKKSARIVGDVMGKYHPHGDSSIYEAMVRMAQDFSYRYPLVDGQGNFGSMDGDGAAAMRYTEARMTKITLELLRDINKDTIDFIDNYDGNEREPSVLPARFPNLLVNGAAGIAVGMATNIPPHNLTEVIDGVLSLSKNPDITINELMEDIQGPDFPTAGLVLGKSGIRRAYETGRGSIQMRSRAEIEERGGGRQRIVVTEIPFQVNKARMIEKIAELVRDKKIDGITDLRDETSLRTGVRVVIDVRKDANASVILNNLYKQTPLQTSFGVNMIALVNGRPKLINLKEALIHYLEHQKTVVRRRTEYNLKKARDRAHILEGLRIALDHIDEIITTIRESDTDKIAMASLQERFKLTERQAQAILDMRLRRLTGLERDKIESEYNELLEYIKELEEILADEEVLLQLVRDELTEIKERFGDERRTEIQLGGLEDLEDEDLIPEEQIVITLSHNNYIKRLPVSTYRSQNRGGRGIQGMNTLDEDFVSQLVTMSTHDHVLFFTNKGRVYKLKGYEVPELSRQSKGIPIINAIELENDETISTMIAVKDLESEEDYLVFATKQGIVKRSSLSNFSRINKNGKIAINFKEDDELIAVRLTTGNEDILIGTAHASLIRFSESTLRPLGRTAAGVKGISLREGDTVVGLDVADSESEDEVLVVTENGYGKRTPVSEYRLSNRGGKGIKTATITERNGNIVCITTVTGEEDLMVVTNAGVIIRLDVHDISQNGRAAQGVRLMKLGDGQFVSTVAKVNEEDDNEENADEAQQSTTTETADVEEVVDDQTPGNAIHTEGDAEMESVESPENDDRIDIRQDFMDRVNEDIESASDNEEDSDE.

Residues 35–501 (LPDVRDGLKP…GLEDLEDEDL (467 aa)) enclose the Topo IIA-type catalytic domain. Tyr123 functions as the O-(5'-phospho-DNA)-tyrosine intermediate in the catalytic mechanism. The GyrA-box signature appears at 528–534 (QNRGGRG). The interval 810–893 (VNEEDDNEEN…ASDNEEDSDE (84 aa)) is disordered. Composition is skewed to acidic residues over residues 812-821 (EEDDNEENAD) and 852-862 (DAEMESVESPE). Residues 863-879 (NDDRIDIRQDFMDRVNE) are compositionally biased toward basic and acidic residues. Residues 880-893 (DIESASDNEEDSDE) show a composition bias toward acidic residues.

It belongs to the type II topoisomerase GyrA/ParC subunit family. As to quaternary structure, heterotetramer, composed of two GyrA and two GyrB chains. In the heterotetramer, GyrA contains the active site tyrosine that forms a transient covalent intermediate with DNA, while GyrB binds cofactors and catalyzes ATP hydrolysis.

Its subcellular location is the cytoplasm. The catalysed reaction is ATP-dependent breakage, passage and rejoining of double-stranded DNA.. A type II topoisomerase that negatively supercoils closed circular double-stranded (ds) DNA in an ATP-dependent manner to modulate DNA topology and maintain chromosomes in an underwound state. Negative supercoiling favors strand separation, and DNA replication, transcription, recombination and repair, all of which involve strand separation. Also able to catalyze the interconversion of other topological isomers of dsDNA rings, including catenanes and knotted rings. Type II topoisomerases break and join 2 DNA strands simultaneously in an ATP-dependent manner. This chain is DNA gyrase subunit A, found in Staphylococcus epidermidis (strain ATCC 12228 / FDA PCI 1200).